A 390-amino-acid chain; its full sequence is Phosphoglycerate kinase (390 aa).

Residues 19 to 21 (DYN), Arg-34, 57 to 60 (HLGR), Arg-115, and Arg-148 each bind substrate. Residues Lys-198, Gly-289, Glu-320, and 347–350 (GGDS) contribute to the ATP site.

The protein belongs to the phosphoglycerate kinase family. Monomer.

It localises to the cytoplasm. It catalyses the reaction (2R)-3-phosphoglycerate + ATP = (2R)-3-phospho-glyceroyl phosphate + ADP. It participates in carbohydrate degradation; glycolysis; pyruvate from D-glyceraldehyde 3-phosphate: step 2/5. This Thermus thermophilus (strain ATCC 27634 / DSM 579 / HB8) protein is Phosphoglycerate kinase (pgk).